A 172-amino-acid polypeptide reads, in one-letter code: Co-chaperone protein HscB homolog (172 aa).

Positions 2–69 (NHFELFNLPV…DSRAAYLLAL (68 aa)) constitute a J domain.

Belongs to the HscB family. Interacts with HscA and stimulates its ATPase activity.

In terms of biological role, co-chaperone involved in the maturation of iron-sulfur cluster-containing proteins. Seems to help targeting proteins to be folded toward HscA. This Acinetobacter baumannii (strain SDF) protein is Co-chaperone protein HscB homolog.